A 352-amino-acid polypeptide reads, in one-letter code: PhoH-like protein (352 aa).

The segment at 1–21 (MTSRETRAADAAGARQADAQV) is disordered. The segment covering 9-20 (ADAAGARQADAQ) has biased composition (low complexity). 150–157 (GPAGTGKT) contributes to the ATP binding site.

This sequence belongs to the PhoH family.

Its subcellular location is the cytoplasm. This Mycobacterium bovis (strain ATCC BAA-935 / AF2122/97) protein is PhoH-like protein.